Here is an 806-residue protein sequence, read N- to C-terminus: Acetyl-CoA decarbonylase/synthase complex subunit alpha 1 (806 aa).

Cys73, Cys76, Cys77, Cys79, Cys84, and Cys94 together coordinate [4Fe-4S] cluster. His117 is a CO binding site. [Ni-4Fe-4S] cluster is bound by residues His250, Cys278, and Cys323. 2 consecutive 4Fe-4S ferredoxin-type domains span residues Asp407–Ala436 and Tyr445–Ile475. Cys417, Cys420, Cys423, Cys427, Cys455, Cys458, Cys461, and Cys465 together coordinate [4Fe-4S] cluster. Cys523, Cys552, and Cys587 together coordinate [Ni-4Fe-4S] cluster.

This sequence belongs to the Ni-containing carbon monoxide dehydrogenase family. Heterotetramer of two alpha and two epsilon subunits. The ACDS complex is made up of alpha, epsilon, beta, gamma and delta subunits with a probable stoichiometry of (alpha(2)epsilon(2))(4)-beta(8)-(gamma(1)delta(1))(8). It depends on [4Fe-4S] cluster as a cofactor. [Ni-4Fe-4S] cluster is required as a cofactor.

It catalyses the reaction CO + 2 oxidized [2Fe-2S]-[ferredoxin] + H2O = 2 reduced [2Fe-2S]-[ferredoxin] + CO2 + 2 H(+). The protein operates within one-carbon metabolism; methanogenesis from acetate. Part of the ACDS complex that catalyzes the reversible cleavage of acetyl-CoA, allowing growth on acetate as sole source of carbon and energy. The alpha-epsilon subcomponent functions as a carbon monoxide dehydrogenase. The chain is Acetyl-CoA decarbonylase/synthase complex subunit alpha 1 from Methanosarcina thermophila.